Consider the following 339-residue polypeptide: Very-long-chain 3-oxoacyl-CoA reductase (339 aa).

Residues 21–41 form a helical membrane-spanning segment; sequence WTTFLLALGSFNALRIIYQTL. NADP(+)-binding residues include Val67, Asn96, Asp121, Asn148, Tyr215, Lys219, Val248, and Ser250. The Proton acceptor role is filled by Tyr215. Lys219 (lowers pKa of active site Tyr) is an active-site residue.

Belongs to the short-chain dehydrogenases/reductases (SDR) family.

It is found in the endoplasmic reticulum membrane. It carries out the reaction a very-long-chain (3R)-3-hydroxyacyl-CoA + NADP(+) = a very-long-chain 3-oxoacyl-CoA + NADPH + H(+). It participates in lipid metabolism; fatty acid biosynthesis. Functionally, component of the microsomal membrane bound fatty acid elongation system, which produces the 26-carbon very long-chain fatty acids (VLCFA) from palmitate. Catalyzes the reduction of the 3-ketoacyl-CoA intermediate that is formed in each cycle of fatty acid elongation. VLCFAs serve as precursors for ceramide and sphingolipids. This chain is Very-long-chain 3-oxoacyl-CoA reductase, found in Coprinopsis cinerea (strain Okayama-7 / 130 / ATCC MYA-4618 / FGSC 9003) (Inky cap fungus).